Reading from the N-terminus, the 173-residue chain is Protein SHI RELATED SEQUENCE 8 (173 aa).

Zn(2+) is bound by residues C52, C63, C68, C72, and C79. Residues 52–79 constitute a DNA-binding region (zn(2)-C6 fungal-type; degenerate); it reads CQDFGNQAKKDCSHMRCRTCCKSRGFEC. Residues 100 to 110 show a composition bias toward low complexity; sequence LATVQPQTQLP. The interval 100 to 121 is disordered; that stretch reads LATVQPQTQLPRGESVPKRHRE.

It belongs to the SHI protein family.

It localises to the nucleus. Transcription activator that binds DNA on 5'-ACTCTAC-3' and promotes auxin homeostasis-regulating gene expression (e.g. YUC genes), as well as genes affecting stamen development, cell expansion and timing of flowering. Synergistically with other SHI-related proteins, regulates gynoecium, stamen and leaf development in a dose-dependent manner, controlling apical-basal patterning. Promotes style and stigma formation, and influence vascular development during gynoecium development. May also have a role in the formation and/or maintenance of the shoot apical meristem (SAM). This chain is Protein SHI RELATED SEQUENCE 8 (SRS8), found in Arabidopsis thaliana (Mouse-ear cress).